The sequence spans 130 residues: Granulin (130 aa).

The signal sequence occupies residues 1 to 26 (MNYSKIFIFGIISLILMALFSSTVES). 2 disulfides stabilise this stretch: Cys-67/Cys-79 and Cys-73/Cys-89.

The protein belongs to the granulin family. Granulins are disulfide bridged.

The protein resides in the secreted. This is Granulin (grn) from Dictyostelium discoideum (Social amoeba).